Here is a 188-residue protein sequence, read N- to C-terminus: Acyl-acyl carrier protein thioesterase ATL2, chloroplastic (188 aa).

A chloroplast-targeting transit peptide spans 1–47 (MFQATSTGAQIMHAAFPRSWRRGHVLPLRSAKIFKPLACLELRGSTG). D64 is a catalytic residue.

Belongs to the 4-hydroxybenzoyl-CoA thioesterase family. As to expression, expressed in endodermal and peridermal cells in young and mature roots, in boundaries of stem lateral organs and developing seeds.

The protein localises to the plastid. It localises to the chloroplast. Acyl-ACP thioesterase involved in the production of fatty acids and beta-keto fatty acids. Can produce beta-keto fatty acids of medium chain (8:0 and 10:0) and small amounts of 8:0 fatty acid when expressed in a heterologous organism (E.coli). May play a role in suberin biosynthesis. The polypeptide is Acyl-acyl carrier protein thioesterase ATL2, chloroplastic (Arabidopsis thaliana (Mouse-ear cress)).